The chain runs to 1187 residues: MPLRHWGMARGSKPVGDGAQPMAAMGGLKVLLHWAGPGGGEPWVTFSESSLTAEEVCIHIAHKVGITPPCFNLFALFDAQAQVWLPPNHILEIPRDASLMLYFRIRFYFRNWHGMNPREPAVYRCGPPGTEASSDQTAQGMQLLDPASFEYLFEQGKHEFVNDVASLWELSTEEEIHHFKNESLGMAFLHLCHLALRHGIPLEEVAKKTSFKDCIPRSFRRHIRQHSALTRLRLRNVFRRFLRDFQPGRLSQQMVMVKYLATLERLAPRFGTERVPVCHLRLLAQAEGEPCYIRDSGVAPTDPGPESAAGPPTHEVLVTGTGGIQWWPVEEEVNKEEGSSGSSGRNPQASLFGKKAKAHKAVGQPADRPREPLWAYFCDFRDITHVVLKEHCVSIHRQDNKCLELSLPSRAAALSFVSLVDGYFRLTADSSHYLCHEVAPPRLVMSIRDGIHGPLLEPFVQAKLRPEDGLYLIHWSTSHPYRLILTVAQRSQAPDGMQSLRLRKFPIEQQDGAFVLEGWGRSFPSVRELGAALQGCLLRAGDDCFSLRRCCLPQPGETSNLIIMRGARASPRTLNLSQLSFHRVDQKEITQLSHLGQGTRTNVYEGRLRVEGSGDPEEGKMDDEDPLVPGRDRGQELRVVLKVLDPSHHDIALAFYETASLMSQVSHTHLAFVHGVCVRGPENIMVTEYVEHGPLDVWLRRERGHVPMAWKMVVAQQLASALSYLENKNLVHGNVCGRNILLARLGLAEGTSPFIKLSDPGVGLGALSREERVERIPWLAPECLPGGANSLSTAMDKWGFGATLLEICFDGEAPLQSRSPSEKEHFYQRQHRLPEPSCPQLATLTSQCLTYEPTQRPSFRTILRDLTRLQPHNLADVLTVNPDSPASDPTVFHKRYLKKIRDLGEGHFGKVSLYCYDPTNDGTGEMVAVKALKADCGPQHRSGWKQEIDILRTLYHEHIIKYKGCCEDQGEKSLQLVMEYVPLGSLRDYLPRHSIGLAQLLLFAQQICEGMAYLHAQHYIHRDLAARNVLLDNDRLVKIGDFGLAKAVPEGHEYYRVREDGDSPVFWYAPECLKEYKFYYASDVWSFGVTLYELLTHCDSSQSPPTKFLELIGIAQGQMTVLRLTELLERGERLPRPDKCPCEVYHLMKNCWETEASFRPTFENLIPILKTVHEKYQGQAPSVFSVC.

The 406-residue stretch at 26 to 431 folds into the FERM domain; the sequence is GGLKVLLHWA…GYFRLTADSS (406 aa). A Phosphotyrosine modification is found at Tyr292. Positions 335 to 366 are disordered; that stretch reads KEEGSSGSSGRNPQASLFGKKAKAHKAVGQPA. Residues 339-349 show a composition bias toward polar residues; that stretch reads SSGSSGRNPQA. Residues 450-529 form the SH2; atypical domain; sequence GIHGPLLEPF…GRSFPSVREL (80 aa). 2 positions are modified to phosphoserine: Ser499 and Ser525. Residues 589-875 form the Protein kinase 1 domain; the sequence is ITQLSHLGQG…LTRLQPHNLA (287 aa). Residue Tyr604 is modified to Phosphotyrosine. Residues 610-629 are disordered; that stretch reads VEGSGDPEEGKMDDEDPLVP. Residues 614 to 626 are compositionally biased toward acidic residues; it reads GDPEEGKMDDEDP. At Ser884 the chain carries Phosphoserine. Residues 897–1176 form the Protein kinase 2 domain; it reads LKKIRDLGEG…PILKTVHEKY (280 aa). Residues 903–911 and Lys930 each bind ATP; that span reads LGEGHFGKV. Asp1023 functions as the Proton acceptor in the catalytic mechanism. Position 1054 is a phosphotyrosine; by autocatalysis (Tyr1054). Tyr1055 carries the phosphotyrosine modification.

Belongs to the protein kinase superfamily. Tyr protein kinase family. JAK subfamily. In terms of assembly, interacts (via FERM domain) with JAKMIP1. Interacts with PIK3R1; this interaction is important for cell migration. Interacts with MPL/TPOR. As to quaternary structure, (Microbial infection) Interacts with Epstein-Barr virus protein LMP1; this interaction inhibits TYK2-mediated interferon signaling. (Microbial infection) Interacts with papillomavirus-18 protein E6; this interaction impairs JAK-STAT activation by interferon-alpha. In terms of assembly, (Microbial infection) Interacts with Epstein-Barr virus (EBV) tegument protein BGLF2; this interaction participates in the inhibition of type I IFN signaling by the virus. Phosphorylated. Phosphorylation by JAK1 at Tyr-1054 and Tyr-1055 induces kinase activation. Observed in all cell lines analyzed. Expressed in a variety of lymphoid and non-lymphoid cell lines.

The catalysed reaction is L-tyrosyl-[protein] + ATP = O-phospho-L-tyrosyl-[protein] + ADP + H(+). With respect to regulation, the protein kinase 1 domain (also termed pseudokinase domain) mediates autoinhibition of the TYK2 kinase domain. Functionally, tyrosine kinase of the non-receptor type involved in numerous cytokines and interferons signaling, which regulates cell growth, development, cell migration, innate and adaptive immunity. Plays both structural and catalytic roles in numerous interleukins and interferons (IFN-alpha/beta) signaling. Associates with heterodimeric cytokine receptor complexes and activates STAT family members including STAT1, STAT3, STAT4 or STAT6. The heterodimeric cytokine receptor complexes are composed of (1) a TYK2-associated receptor chain (IFNAR1, IL12RB1, IL10RB or IL13RA1), and (2) a second receptor chain associated either with JAK1 or JAK2. In response to cytokine-binding to receptors, phosphorylates and activates receptors (IFNAR1, IL12RB1, IL10RB or IL13RA1), creating docking sites for STAT members. In turn, recruited STATs are phosphorylated by TYK2 (or JAK1/JAK2 on the second receptor chain), form homo- and heterodimers, translocate to the nucleus, and regulate cytokine/growth factor responsive genes. Negatively regulates STAT3 activity by promototing phosphorylation at a specific tyrosine that differs from the site used for signaling. This is Non-receptor tyrosine-protein kinase TYK2 (TYK2) from Homo sapiens (Human).